The chain runs to 100 residues: Large ribosomal subunit protein uL23 (100 aa).

It belongs to the universal ribosomal protein uL23 family. In terms of assembly, part of the 50S ribosomal subunit. Contacts protein L29, and trigger factor when it is bound to the ribosome.

One of the early assembly proteins it binds 23S rRNA. One of the proteins that surrounds the polypeptide exit tunnel on the outside of the ribosome. Forms the main docking site for trigger factor binding to the ribosome. This is Large ribosomal subunit protein uL23 from Vibrio cholerae serotype O1 (strain ATCC 39541 / Classical Ogawa 395 / O395).